The chain runs to 364 residues: Aminomethyltransferase (364 aa).

This sequence belongs to the GcvT family. The glycine cleavage system is composed of four proteins: P, T, L and H.

It catalyses the reaction N(6)-[(R)-S(8)-aminomethyldihydrolipoyl]-L-lysyl-[protein] + (6S)-5,6,7,8-tetrahydrofolate = N(6)-[(R)-dihydrolipoyl]-L-lysyl-[protein] + (6R)-5,10-methylene-5,6,7,8-tetrahydrofolate + NH4(+). Its function is as follows. The glycine cleavage system catalyzes the degradation of glycine. The sequence is that of Aminomethyltransferase from Photorhabdus laumondii subsp. laumondii (strain DSM 15139 / CIP 105565 / TT01) (Photorhabdus luminescens subsp. laumondii).